The sequence spans 355 residues: Peptide chain release factor 1 (355 aa).

Gln234 is subject to N5-methylglutamine.

Belongs to the prokaryotic/mitochondrial release factor family. In terms of processing, methylated by PrmC. Methylation increases the termination efficiency of RF1.

It localises to the cytoplasm. Peptide chain release factor 1 directs the termination of translation in response to the peptide chain termination codons UAG and UAA. The sequence is that of Peptide chain release factor 1 from Metamycoplasma arthritidis (strain 158L3-1) (Mycoplasma arthritidis).